A 229-amino-acid chain; its full sequence is Rab-like protein 2A (229 aa).

Residues 28-35 (GDSAVGKS), 76-80 (DTAGQ), and 133-136 (NKID) contribute to the GTP site. The interval 200-229 (NLEQEEEDVPDQEQSGSIETPSEEVASPHS) is disordered.

This sequence belongs to the small GTPase superfamily. Rab family. As to quaternary structure, interacts with IFT27, IFT81, IFT172, ATP6V1E1, HK1, LDHC, MAPRE1 and HSPA2.

Functionally, plays an essential role in male fertility, sperm intra-flagellar transport, and tail assembly. Binds, in a GTP-regulated manner, to a specific set of effector proteins including key proteins involved in cilia development and function and delivers them into the growing sperm tail. The protein is Rab-like protein 2A (RABL2A) of Pongo abelii (Sumatran orangutan).